We begin with the raw amino-acid sequence, 581 residues long: Arginine--tRNA ligase (581 aa).

The 'HIGH' region signature appears at 126–136; it reads PNLAKEMHVGH.

This sequence belongs to the class-I aminoacyl-tRNA synthetase family. As to quaternary structure, monomer.

Its subcellular location is the cytoplasm. The catalysed reaction is tRNA(Arg) + L-arginine + ATP = L-arginyl-tRNA(Arg) + AMP + diphosphate. The polypeptide is Arginine--tRNA ligase (Shewanella baltica (strain OS223)).